A 404-amino-acid polypeptide reads, in one-letter code: Indole-3-acetate O-methyltransferase 1 (404 aa).

S-adenosyl-L-methionine contacts are provided by residues 82 to 83, Asn88, Asp120, 169 to 171, and 186 to 188; these read GC, TFY, and TFS. Residues Asn208, Val212, Arg294, Asp295, Phe297, and Asn298 each contribute to the Mg(2+) site.

It belongs to the methyltransferase superfamily. SABATH family. In terms of assembly, homodimer. Mg(2+) is required as a cofactor. Expressed in roots and panicles.

It catalyses the reaction (indol-3-yl)acetate + S-adenosyl-L-methionine = methyl (indol-3-yl)acetate + S-adenosyl-L-homocysteine. Catalyzes the methylation of the free carboxyl end of the plant hormone indole-3-acetic acid (IAA). Converts IAA to IAA methyl ester (MeIAA). Regulates IAA activities by IAA methylation. Methylation of IAA plays an important role in regulating plant development and auxin homeostasis. MeIAA seems to be an inactive form of IAA. This is Indole-3-acetate O-methyltransferase 1 (IAMT1) from Oryza sativa subsp. japonica (Rice).